Consider the following 177-residue polypeptide: Crossover junction endodeoxyribonuclease RuvC (177 aa).

Catalysis depends on residues Asp7, Glu68, and Asp141. 3 residues coordinate Mg(2+): Asp7, Glu68, and Asp141.

Belongs to the RuvC family. In terms of assembly, homodimer which binds Holliday junction (HJ) DNA. The HJ becomes 2-fold symmetrical on binding to RuvC with unstacked arms; it has a different conformation from HJ DNA in complex with RuvA. In the full resolvosome a probable DNA-RuvA(4)-RuvB(12)-RuvC(2) complex forms which resolves the HJ. The cofactor is Mg(2+).

The protein localises to the cytoplasm. It catalyses the reaction Endonucleolytic cleavage at a junction such as a reciprocal single-stranded crossover between two homologous DNA duplexes (Holliday junction).. Its function is as follows. The RuvA-RuvB-RuvC complex processes Holliday junction (HJ) DNA during genetic recombination and DNA repair. Endonuclease that resolves HJ intermediates. Cleaves cruciform DNA by making single-stranded nicks across the HJ at symmetrical positions within the homologous arms, yielding a 5'-phosphate and a 3'-hydroxyl group; requires a central core of homology in the junction. The consensus cleavage sequence is 5'-(A/T)TT(C/G)-3'. Cleavage occurs on the 3'-side of the TT dinucleotide at the point of strand exchange. HJ branch migration catalyzed by RuvA-RuvB allows RuvC to scan DNA until it finds its consensus sequence, where it cleaves and resolves the cruciform DNA. In Nocardioides sp. (strain ATCC BAA-499 / JS614), this protein is Crossover junction endodeoxyribonuclease RuvC.